The chain runs to 397 residues: Riboflavin biosynthesis protein RibBA (397 aa).

The segment at 1–199 is DHBP synthase; sequence MFHRIEEALE…IEDLIAYRRH (199 aa). D-ribulose 5-phosphate is bound by residues 26-27, Asp31, 138-142, and Glu162; these read RE and RAGHT. Glu27 provides a ligand contact to Mg(2+). His141 provides a ligand contact to Mg(2+). A GTP cyclohydrolase II region spans residues 200–397; it reads HETLVTREAE…VNKLGHLLNL (198 aa). 250–254 contacts GTP; that stretch reads RVHSE. Residues Cys255, Cys266, and Cys268 each coordinate Zn(2+). GTP is bound by residues Gln271, 293-295, and Thr315; that span reads EGR. Catalysis depends on Asp327, which acts as the Proton acceptor; for GTP cyclohydrolase activity. The active-site Nucleophile; for GTP cyclohydrolase activity is Arg329. The GTP site is built by Thr350 and Lys355.

This sequence in the N-terminal section; belongs to the DHBP synthase family. The protein in the C-terminal section; belongs to the GTP cyclohydrolase II family. Mg(2+) serves as cofactor. It depends on Mn(2+) as a cofactor. The cofactor is Zn(2+).

The catalysed reaction is D-ribulose 5-phosphate = (2S)-2-hydroxy-3-oxobutyl phosphate + formate + H(+). It catalyses the reaction GTP + 4 H2O = 2,5-diamino-6-hydroxy-4-(5-phosphoribosylamino)-pyrimidine + formate + 2 phosphate + 3 H(+). It participates in cofactor biosynthesis; riboflavin biosynthesis; 2-hydroxy-3-oxobutyl phosphate from D-ribulose 5-phosphate: step 1/1. It functions in the pathway cofactor biosynthesis; riboflavin biosynthesis; 5-amino-6-(D-ribitylamino)uracil from GTP: step 1/4. Catalyzes the conversion of D-ribulose 5-phosphate to formate and 3,4-dihydroxy-2-butanone 4-phosphate. In terms of biological role, catalyzes the conversion of GTP to 2,5-diamino-6-ribosylamino-4(3H)-pyrimidinone 5'-phosphate (DARP), formate and pyrophosphate. The chain is Riboflavin biosynthesis protein RibBA from Bacillus cereus (strain ATCC 14579 / DSM 31 / CCUG 7414 / JCM 2152 / NBRC 15305 / NCIMB 9373 / NCTC 2599 / NRRL B-3711).